A 128-amino-acid polypeptide reads, in one-letter code: Elongation factor G (128 aa).

Belongs to the GTP-binding elongation factor family. EF-G/EF-2 subfamily.

It localises to the cytoplasm. In terms of biological role, catalyzes the GTP-dependent ribosomal translocation step during translation elongation. During this step, the ribosome changes from the pre-translocational (PRE) to the post-translocational (POST) state as the newly formed A-site-bound peptidyl-tRNA and P-site-bound deacylated tRNA move to the P and E sites, respectively. Catalyzes the coordinated movement of the two tRNA molecules, the mRNA and conformational changes in the ribosome. The polypeptide is Elongation factor G (fusA) (Planobispora rosea).